We begin with the raw amino-acid sequence, 117 residues long: Protein GL2-INTERACTING REPRESSOR 2 (117 aa).

The interval 1 to 56 (MSRRNKNGPKLELRLNLSPPPSQASQMSLVRSPNRSNTTSPSSCVSSETNQEENET) is disordered. The EAR motif lies at 10 to 15 (KLELRL). Positions 31–49 (RSPNRSNTTSPSSCVSSET) are enriched in low complexity.

As to quaternary structure, interacts with GL2. Interacts with TPL.

The protein localises to the nucleus. Functionally, acts as a negative regulator of root hair development redundantly with GIR1. GIR1 and GIR2 may function as adapter proteins that associate with GL2 and participate in the control of root hair formation. GIR1 and GIR2 may function as adapter proteins that associate with TPL and participate in the repression of root gene expression. This Arabidopsis thaliana (Mouse-ear cress) protein is Protein GL2-INTERACTING REPRESSOR 2.